Reading from the N-terminus, the 444-residue chain is MNITETSADGLKREYKVVISAQDIEQKVQGRLEELRRTVQLPGFRPGKVPVAVIKQRYGGSVLAEALEDAIADSSRQALNERGLRIAMQPKINVEKYEDGGDLSYTMGVELLPDIEPGDLSGLELEKPVATVEDSAVDEALTRLASAHSVQAPVTEDRAAEKGDIAVIDSPVRSTGEALPGMDGKDYPLELGANQFVPGFEDQLVGAKAGEHRTVKVTFPADYPHDRLKGADTVFEVDVKELRKNVPAEVNDDLAKEFGMESLEKLREAVGRPHQGRIRQRVALRVKRQLLDKLAEAHSFEVPPGMVDVEFEGIWQRLQQELQNGTAGEDAGKPEEELKTEYRGIAERRVRLGLLLSEIGRRNDIQVTQDEINRALIAEARRFPGQERQVFEFFKQNREALENLRAPIFEDKVVDYILDQAKVSEKPVSAEELMKDPDEEAEAA.

The 86-residue stretch at 163 to 248 folds into the PPIase FKBP-type domain; it reads GDIAVIDSPV…VKELRKNVPA (86 aa).

This sequence belongs to the FKBP-type PPIase family. Tig subfamily.

The protein localises to the cytoplasm. It catalyses the reaction [protein]-peptidylproline (omega=180) = [protein]-peptidylproline (omega=0). Its function is as follows. Involved in protein export. Acts as a chaperone by maintaining the newly synthesized protein in an open conformation. Functions as a peptidyl-prolyl cis-trans isomerase. This chain is Trigger factor (tig), found in Azospirillum brasilense.